Consider the following 740-residue polypeptide: Ribosomal protein S6 kinase alpha-6 (740 aa).

The 260-residue stretch at 67 to 326 (FELLKVLGQG…VEEIKRHTFF (260 aa)) folds into the Protein kinase 1 domain. Residues 73-81 (LGQGSFGKV) and Lys99 each bind ATP. The Proton acceptor role is filled by Asp192. The AGC-kinase C-terminal domain occupies 327–396 (STIDWNKLYR…VAPVSLEESK (70 aa)). The Protein kinase 2 domain occupies 420–677 (YELKEDIGVG…AEQVLKHSWI (258 aa)). Residues 426–434 (IGVGSYSIC) and Lys449 each bind ATP. The Proton acceptor role is filled by Asp537.

It belongs to the protein kinase superfamily. AGC Ser/Thr protein kinase family. S6 kinase subfamily. As to quaternary structure, forms a complex with either ERK1 or ERK2 in quiescent cells. Transiently dissociates following mitogenic stimulation. Mg(2+) is required as a cofactor.

It carries out the reaction L-seryl-[protein] + ATP = O-phospho-L-seryl-[protein] + ADP + H(+). The enzyme catalyses L-threonyl-[protein] + ATP = O-phospho-L-threonyl-[protein] + ADP + H(+). Activated by multiple phosphorylations on threonine and serine residues. Functionally, serine/threonine kinase that may play a role in mediating the growth-factor and stress induced activation of the transcription factor CREB. This is Ribosomal protein S6 kinase alpha-6 (rps6ka6) from Danio rerio (Zebrafish).